Reading from the N-terminus, the 81-residue chain is Small cysteine-rich protein 6 (81 aa).

The N-terminal stretch at M1–S23 is a signal peptide. The propeptide occupies G24–N25.

The protein belongs to the Cnidaria small cysteine-rich protein (SCRiP) family. beta subfamily. Post-translationally, contains 4 disulfide bonds.

It localises to the secreted. The protein resides in the nematocyst. Induces neurotoxic symptoms on zebrafish. Has also been claimed to be implied in calcification, but tests on homolog proteins suggest that proteins of this family have a neurotoxic function and not a calcification function. This is Small cysteine-rich protein 6 from Orbicella faveolata (Mountainous star coral).